We begin with the raw amino-acid sequence, 202 residues long: Osteoclast-stimulating factor 1 (202 aa).

Positions 12–71 (GQVKVFRALYTFEPRTPDELYFEEGDIIYISDMSDTNWWKGTCKGRTGLIPSNYVAEQAE) constitute an SH3 domain. ANK repeat units follow at residues 72–101 (SIDNPLHEAAKRGNLSWLRECLDNQVGVNG), 105–135 (AGNTALYWACHGGHKDIVDVLFTQANLELNQ), and 139–168 (LGDTALHAAAWKGYADIVEMLLAKGARTDL).

Its subcellular location is the cytoplasm. Functionally, induces bone resorption, acting probably through a signaling cascade which results in the secretion of factor(s) enhancing osteoclast formation and activity. The sequence is that of Osteoclast-stimulating factor 1 (OSTF1) from Gallus gallus (Chicken).